The sequence spans 462 residues: Protoheme IX farnesyltransferase, mitochondrial (462 aa).

7 helical membrane-spanning segments follow: residues 152–172 (LTILVTLSSICSYAISPYTVS), 173–193 (LPELLFLTMGTALCSGAANAI), 237–257 (MLFLGVNPTVSFLGFLNIVLY), 269–289 (IINTWVGAIVGAIPPLMGWAA), 296–316 (PGAWCLAGLLYAWQFPHFNAL), 348–368 (SLLMFPLCFGLSYFGITDWVF), and 411–431 (AKKLFWGSVWHLPAVLILAML).

The protein belongs to the UbiA prenyltransferase family.

The protein localises to the mitochondrion membrane. Converts protoheme IX and farnesyl diphosphate to heme O. This Debaryomyces hansenii (strain ATCC 36239 / CBS 767 / BCRC 21394 / JCM 1990 / NBRC 0083 / IGC 2968) (Yeast) protein is Protoheme IX farnesyltransferase, mitochondrial (COX10).